Reading from the N-terminus, the 275-residue chain is 3-methyl-2-oxobutanoate hydroxymethyltransferase (275 aa).

2 residues coordinate Mg(2+): aspartate 49 and aspartate 88. Residues 49 to 50, aspartate 88, and lysine 118 each bind 3-methyl-2-oxobutanoate; that span reads DS. Glutamate 120 lines the Mg(2+) pocket. Glutamate 187 serves as the catalytic Proton acceptor.

Belongs to the PanB family. In terms of assembly, homodecamer; pentamer of dimers. Requires Mg(2+) as cofactor.

The protein localises to the cytoplasm. It carries out the reaction 3-methyl-2-oxobutanoate + (6R)-5,10-methylene-5,6,7,8-tetrahydrofolate + H2O = 2-dehydropantoate + (6S)-5,6,7,8-tetrahydrofolate. Its pathway is cofactor biosynthesis; (R)-pantothenate biosynthesis; (R)-pantoate from 3-methyl-2-oxobutanoate: step 1/2. Its function is as follows. Catalyzes the reversible reaction in which hydroxymethyl group from 5,10-methylenetetrahydrofolate is transferred onto alpha-ketoisovalerate to form ketopantoate. The chain is 3-methyl-2-oxobutanoate hydroxymethyltransferase from Bartonella henselae (strain ATCC 49882 / DSM 28221 / CCUG 30454 / Houston 1) (Rochalimaea henselae).